Consider the following 140-residue polypeptide: Large-conductance mechanosensitive channel (140 aa).

A run of 2 helical transmembrane segments spans residues 14–34 (VMDL…TGSL) and 85–105 (GAFV…FLLV).

It belongs to the MscL family. In terms of assembly, homopentamer.

It localises to the cell inner membrane. Functionally, channel that opens in response to stretch forces in the membrane lipid bilayer. May participate in the regulation of osmotic pressure changes within the cell. The sequence is that of Large-conductance mechanosensitive channel from Sphingopyxis alaskensis (strain DSM 13593 / LMG 18877 / RB2256) (Sphingomonas alaskensis).